Reading from the N-terminus, the 430-residue chain is Adenylosuccinate synthetase (430 aa).

Residues 13–19 (GDEGKGK) and 41–43 (GHT) each bind GTP. Aspartate 14 serves as the catalytic Proton acceptor. Mg(2+)-binding residues include aspartate 14 and glycine 41. Residues 14–17 (DEGK), 39–42 (NAGH), threonine 130, arginine 144, glutamine 225, threonine 240, and arginine 304 each bind IMP. Histidine 42 acts as the Proton donor in catalysis. 300 to 306 (ATTGRAR) contacts substrate. GTP-binding positions include arginine 306, 332–334 (KLD), and 414–416 (STG).

Belongs to the adenylosuccinate synthetase family. As to quaternary structure, homodimer. It depends on Mg(2+) as a cofactor.

The protein localises to the cytoplasm. It catalyses the reaction IMP + L-aspartate + GTP = N(6)-(1,2-dicarboxyethyl)-AMP + GDP + phosphate + 2 H(+). It participates in purine metabolism; AMP biosynthesis via de novo pathway; AMP from IMP: step 1/2. In terms of biological role, plays an important role in the de novo pathway of purine nucleotide biosynthesis. Catalyzes the first committed step in the biosynthesis of AMP from IMP. The protein is Adenylosuccinate synthetase of Pseudomonas syringae pv. tomato (strain ATCC BAA-871 / DC3000).